The chain runs to 123 residues: Large ribosomal subunit protein uL29 (123 aa).

The protein belongs to the universal ribosomal protein uL29 family.

In Theileria parva (East coast fever infection agent), this protein is Large ribosomal subunit protein uL29 (RPL35).